A 211-amino-acid chain; its full sequence is 7-carboxy-7-deazaguanine synthase (211 aa).

Residues 22-24 and Arg-37 each bind substrate; that span reads LQG. In terms of domain architecture, Radical SAM core spans 28–211; the sequence is NTGMPSVFVR…LQTHKLIGIE (184 aa). Positions 41, 45, and 48 each coordinate [4Fe-4S] cluster. Mg(2+) is bound at residue Thr-50. A substrate-binding site is contributed by Thr-78. S-adenosyl-L-methionine is bound by residues Gly-80 and 122-124; that span reads SPK.

It belongs to the radical SAM superfamily. 7-carboxy-7-deazaguanine synthase family. As to quaternary structure, homodimer. [4Fe-4S] cluster is required as a cofactor. The cofactor is S-adenosyl-L-methionine. Mg(2+) serves as cofactor.

It carries out the reaction 6-carboxy-5,6,7,8-tetrahydropterin + H(+) = 7-carboxy-7-deazaguanine + NH4(+). It functions in the pathway purine metabolism; 7-cyano-7-deazaguanine biosynthesis. Functionally, catalyzes the complex heterocyclic radical-mediated conversion of 6-carboxy-5,6,7,8-tetrahydropterin (CPH4) to 7-carboxy-7-deazaguanine (CDG), a step common to the biosynthetic pathways of all 7-deazapurine-containing compounds. The sequence is that of 7-carboxy-7-deazaguanine synthase from Haemophilus influenzae (strain ATCC 51907 / DSM 11121 / KW20 / Rd).